Consider the following 269-residue polypeptide: Gene 69 protein (269 aa).

This chain is Gene 69 protein (69), found in Mycobacterium (Mycobacteriophage D29).